We begin with the raw amino-acid sequence, 1133 residues long: Nuclear pore complex-interacting protein family member B5 (1133 aa).

The chain crosses the membrane as a helical span at residues Trp60–Val84. Disordered regions lie at residues Asn241–Ser262, Leu290–Pro575, and Glu868–Ser1133. Positions Gln252 to Ser262 are enriched in polar residues. Pro residues predominate over residues Pro349–Pro359. Composition is skewed to basic and acidic residues over residues Asp406–Arg416, Asp448–Arg458, Asp490–Arg500, Asp528–Arg538, Asp903–Arg913, Asp945–Arg955, and Asp987–Arg997.

It belongs to the NPIP family.

The protein resides in the membrane. The sequence is that of Nuclear pore complex-interacting protein family member B5 (NPIPB5) from Homo sapiens (Human).